The chain runs to 474 residues: Pyruvate kinase (474 aa).

Arginine 32 provides a ligand contact to substrate. Positions 34, 36, and 66 each coordinate K(+). Residue 34–37 participates in ATP binding; sequence NFSH. 2 residues coordinate ATP: arginine 73 and lysine 155. Residue glutamate 221 coordinates Mg(2+). Glycine 244, aspartate 245, and threonine 277 together coordinate substrate. Aspartate 245 provides a ligand contact to Mg(2+).

Belongs to the pyruvate kinase family. Homotetramer. Requires Mg(2+) as cofactor. The cofactor is K(+).

It catalyses the reaction pyruvate + ATP = phosphoenolpyruvate + ADP + H(+). Its pathway is carbohydrate degradation; glycolysis; pyruvate from D-glyceraldehyde 3-phosphate: step 5/5. This is Pyruvate kinase (pykF) from Clostridium perfringens (strain 13 / Type A).